Reading from the N-terminus, the 161-residue chain is Large ribosomal subunit protein uL15 (161 aa).

Residues 1–39 (MTKLNELAPREGSTKGRMRVGRGPGSGKGKTAGRGVKGQ) form a disordered region. Residues 22–36 (RGPGSGKGKTAGRGV) are compositionally biased toward gly residues.

Belongs to the universal ribosomal protein uL15 family. Part of the 50S ribosomal subunit.

Functionally, binds to the 23S rRNA. The chain is Large ribosomal subunit protein uL15 from Caulobacter vibrioides (strain ATCC 19089 / CIP 103742 / CB 15) (Caulobacter crescentus).